The primary structure comprises 373 residues: T-protein (373 aa).

Residues methionine 1–glycine 90 form the Chorismate mutase domain. The region spanning arginine 99–serine 361 is the Prephenate/arogenate dehydrogenase domain.

The protein in the C-terminal section; belongs to the prephenate/arogenate dehydrogenase family.

It is found in the cytoplasm. It carries out the reaction chorismate = prephenate. The enzyme catalyses prephenate + NAD(+) = 3-(4-hydroxyphenyl)pyruvate + CO2 + NADH. It participates in amino-acid biosynthesis; L-tyrosine biosynthesis; (4-hydroxyphenyl)pyruvate from prephenate (NAD(+) route): step 1/1. Its pathway is metabolic intermediate biosynthesis; prephenate biosynthesis; prephenate from chorismate: step 1/1. The sequence is that of T-protein (tyrA) from Escherichia coli (strain K12).